We begin with the raw amino-acid sequence, 400 residues long: Elongation factor Tu 2 (400 aa).

A tr-type G domain is found at 10–209 (KPHVNIGTIG…KVDEYIPTPQ (200 aa)). The tract at residues 19-26 (GHVDHGKT) is G1. 19–26 (GHVDHGKT) serves as a coordination point for GTP. A Mg(2+)-binding site is contributed by T26. The G2 stretch occupies residues 60 to 64 (GITIN). The interval 81-84 (DCPG) is G3. Residues 81–85 (DCPGH) and 136–139 (NKAD) each bind GTP. The segment at 136-139 (NKAD) is G4. A G5 region spans residues 174–176 (SAL).

The protein belongs to the TRAFAC class translation factor GTPase superfamily. Classic translation factor GTPase family. EF-Tu/EF-1A subfamily. Monomer.

It is found in the cytoplasm. The enzyme catalyses GTP + H2O = GDP + phosphate + H(+). In terms of biological role, GTP hydrolase that promotes the GTP-dependent binding of aminoacyl-tRNA to the A-site of ribosomes during protein biosynthesis. The polypeptide is Elongation factor Tu 2 (Carboxydothermus hydrogenoformans (strain ATCC BAA-161 / DSM 6008 / Z-2901)).